The primary structure comprises 335 residues: MPQPNRPRKGSMGFSPRKRAESEVPRFNSWPADDGEVGLQGFAGYKAGMTHVVLVDDKANAPTEGMETTVPVTVVETPPMRAAAVRLYEDTPYGKKPLTEVWADDTHESLDRTLSVPDEGGDTDELIEALDTEEIADIRVITHTVPGDTAGVPKKNPDVMETRVGGGTLADRLEFAADLIEDGGVHAFGDVFRAGEFTDAAGITKGKGTQGPVKRWGVQKRKGKHARQGWRRRIGNLGPWNPSRVRSTVPQQGQTGYHQRTELNKRLIDINDGDEPTPDGGFPNYGEVDGPYTLVKGSVPGPEQRLVRFRPAVRPNESPRLDPEVRYVSTASNQG.

Disordered stretches follow at residues 1–35 (MPQPNRPRKGSMGFSPRKRAESEVPRFNSWPADDG), 234–256 (IGNLGPWNPSRVRSTVPQQGQTG), and 312–335 (AVRPNESPRLDPEVRYVSTASNQG). Residues 244–256 (RVRSTVPQQGQTG) are compositionally biased toward polar residues.

This sequence belongs to the universal ribosomal protein uL3 family. Part of the 50S ribosomal subunit. Forms a cluster with proteins L14 and L24e.

Its function is as follows. One of the primary rRNA binding proteins, it binds directly near the 3'-end of the 23S rRNA, where it nucleates assembly of the 50S subunit. The chain is Large ribosomal subunit protein uL3 from Halobacterium salinarum (strain ATCC 29341 / DSM 671 / R1).